A 346-amino-acid polypeptide reads, in one-letter code: Ribosomal RNA small subunit methyltransferase H (346 aa).

S-adenosyl-L-methionine contacts are provided by residues 53–55, Asp70, Phe97, Asp114, and Gln121; that span reads GGY.

Belongs to the methyltransferase superfamily. RsmH family.

The protein resides in the cytoplasm. It carries out the reaction cytidine(1402) in 16S rRNA + S-adenosyl-L-methionine = N(4)-methylcytidine(1402) in 16S rRNA + S-adenosyl-L-homocysteine + H(+). In terms of biological role, specifically methylates the N4 position of cytidine in position 1402 (C1402) of 16S rRNA. This is Ribosomal RNA small subunit methyltransferase H from Bartonella henselae (strain ATCC 49882 / DSM 28221 / CCUG 30454 / Houston 1) (Rochalimaea henselae).